Reading from the N-terminus, the 415-residue chain is Tyrosine--tRNA ligase (415 aa).

Y34 is a binding site for L-tyrosine. The 'HIGH' region signature appears at 39–48; the sequence is PSADSLHLGN. Y162 and Q166 together coordinate L-tyrosine. Positions 224–228 match the 'KMSKS' region motif; sequence KFGKS. Residue K227 participates in ATP binding. Residues 346–413 enclose the S4 RNA-binding domain; sequence IKIIDLLNLA…KRNYFLIVWN (68 aa).

This sequence belongs to the class-I aminoacyl-tRNA synthetase family. TyrS type 1 subfamily. As to quaternary structure, homodimer.

It localises to the cytoplasm. It catalyses the reaction tRNA(Tyr) + L-tyrosine + ATP = L-tyrosyl-tRNA(Tyr) + AMP + diphosphate + H(+). Its function is as follows. Catalyzes the attachment of tyrosine to tRNA(Tyr) in a two-step reaction: tyrosine is first activated by ATP to form Tyr-AMP and then transferred to the acceptor end of tRNA(Tyr). The chain is Tyrosine--tRNA ligase from Ureaplasma urealyticum serovar 10 (strain ATCC 33699 / Western).